Consider the following 185-residue polypeptide: Calcium-binding protein K-like (185 aa).

EF-hand domains follow at residues 60 to 95 (WDEASMVRMFKLFDSDGNGVIDVKEFITALYMMTRA) and 96 to 131 (PTTDKLGFLFDLFDSDKSGYLEAGEIEKLVNIVVVC). Ca(2+) contacts are provided by Asp-73, Asp-75, Asn-77, Glu-84, Asp-109, Asp-111, Ser-113, Tyr-115, and Glu-120.

The protein belongs to the recoverin family.

This chain is Calcium-binding protein K-like, found in Dictyostelium discoideum (Social amoeba).